Consider the following 29-residue polypeptide: MDTVSLAWAALMVVFTFSLSLVVWGRSGL.

The helical transmembrane segment at 3 to 23 (TVSLAWAALMVVFTFSLSLVV) threads the bilayer.

The protein belongs to the PetN family. In terms of assembly, the 4 large subunits of the cytochrome b6-f complex are cytochrome b6, subunit IV (17 kDa polypeptide, PetD), cytochrome f and the Rieske protein, while the 4 small subunits are PetG, PetL, PetM and PetN. The complex functions as a dimer.

It is found in the plastid. The protein resides in the chloroplast thylakoid membrane. In terms of biological role, component of the cytochrome b6-f complex, which mediates electron transfer between photosystem II (PSII) and photosystem I (PSI), cyclic electron flow around PSI, and state transitions. The chain is Cytochrome b6-f complex subunit 8 from Chloranthus spicatus (Chulantree).